A 277-amino-acid chain; its full sequence is 3-methyl-2-oxobutanoate hydroxymethyltransferase (277 aa).

2 residues coordinate Mg(2+): aspartate 53 and aspartate 96. 3-methyl-2-oxobutanoate contacts are provided by residues 53–54 (DS), aspartate 96, and lysine 126. A Mg(2+)-binding site is contributed by glutamate 128. The active-site Proton acceptor is the glutamate 195.

The protein belongs to the PanB family. Homodecamer; pentamer of dimers. Mg(2+) is required as a cofactor.

It is found in the cytoplasm. It catalyses the reaction 3-methyl-2-oxobutanoate + (6R)-5,10-methylene-5,6,7,8-tetrahydrofolate + H2O = 2-dehydropantoate + (6S)-5,6,7,8-tetrahydrofolate. The protein operates within cofactor biosynthesis; (R)-pantothenate biosynthesis; (R)-pantoate from 3-methyl-2-oxobutanoate: step 1/2. Functionally, catalyzes the reversible reaction in which hydroxymethyl group from 5,10-methylenetetrahydrofolate is transferred onto alpha-ketoisovalerate to form ketopantoate. This chain is 3-methyl-2-oxobutanoate hydroxymethyltransferase, found in Pelodictyon phaeoclathratiforme (strain DSM 5477 / BU-1).